A 356-amino-acid chain; its full sequence is Methylthioribose-1-phosphate isomerase (356 aa).

Substrate-binding positions include 53-55 (RGA), R97, and Q203. Catalysis depends on D244, which acts as the Proton donor. Residue 254–255 (NK) participates in substrate binding.

Belongs to the eIF-2B alpha/beta/delta subunits family. MtnA subfamily.

It catalyses the reaction 5-(methylsulfanyl)-alpha-D-ribose 1-phosphate = 5-(methylsulfanyl)-D-ribulose 1-phosphate. It functions in the pathway amino-acid biosynthesis; L-methionine biosynthesis via salvage pathway; L-methionine from S-methyl-5-thio-alpha-D-ribose 1-phosphate: step 1/6. Catalyzes the interconversion of methylthioribose-1-phosphate (MTR-1-P) into methylthioribulose-1-phosphate (MTRu-1-P). This Rhodopirellula baltica (strain DSM 10527 / NCIMB 13988 / SH1) protein is Methylthioribose-1-phosphate isomerase.